The primary structure comprises 488 residues: Probable phenylalanine--tRNA ligase alpha subunit (488 aa).

Residues 1 to 146 (MSIEQDILNL…KRKLVDINKK (146 aa)) form a contains the major tRNA-Phe binding sites region. Residues Thr315, 363 to 365 (QVE), and Tyr403 contribute to the L-phenylalanine site. A Mg(2+)-binding site is contributed by Glu405. Position 429 (Phe429) interacts with L-phenylalanine.

This sequence belongs to the class-II aminoacyl-tRNA synthetase family. Phe-tRNA synthetase alpha subunit type 2 subfamily. As to quaternary structure, tetramer of two alpha and two beta subunits. The cofactor is Mg(2+).

The protein resides in the cytoplasm. The enzyme catalyses tRNA(Phe) + L-phenylalanine + ATP = L-phenylalanyl-tRNA(Phe) + AMP + diphosphate + H(+). This Enterocytozoon bieneusi (strain H348) (Microsporidian parasite) protein is Probable phenylalanine--tRNA ligase alpha subunit.